The primary structure comprises 460 residues: UDP-N-acetylmuramoylalanine--D-glutamate ligase (460 aa).

An ATP-binding site is contributed by 120–126; sequence GSNGKTT.

It belongs to the MurCDEF family.

The protein localises to the cytoplasm. It carries out the reaction UDP-N-acetyl-alpha-D-muramoyl-L-alanine + D-glutamate + ATP = UDP-N-acetyl-alpha-D-muramoyl-L-alanyl-D-glutamate + ADP + phosphate + H(+). The protein operates within cell wall biogenesis; peptidoglycan biosynthesis. Its function is as follows. Cell wall formation. Catalyzes the addition of glutamate to the nucleotide precursor UDP-N-acetylmuramoyl-L-alanine (UMA). This Lactobacillus gasseri (strain ATCC 33323 / DSM 20243 / BCRC 14619 / CIP 102991 / JCM 1131 / KCTC 3163 / NCIMB 11718 / NCTC 13722 / AM63) protein is UDP-N-acetylmuramoylalanine--D-glutamate ligase.